We begin with the raw amino-acid sequence, 981 residues long: Bifunctional glutamine synthetase adenylyltransferase/adenylyl-removing enzyme (981 aa).

The interval 1-473 (MTMPLPSIEQ…RSVFNNLIGF (473 aa)) is adenylyl removase. Positions 479–981 (ADDSDNAWSD…HQIWQKLFFE (503 aa)) are adenylyl transferase.

The protein belongs to the GlnE family. Mg(2+) serves as cofactor.

It catalyses the reaction [glutamine synthetase]-O(4)-(5'-adenylyl)-L-tyrosine + phosphate = [glutamine synthetase]-L-tyrosine + ADP. The catalysed reaction is [glutamine synthetase]-L-tyrosine + ATP = [glutamine synthetase]-O(4)-(5'-adenylyl)-L-tyrosine + diphosphate. In terms of biological role, involved in the regulation of glutamine synthetase GlnA, a key enzyme in the process to assimilate ammonia. When cellular nitrogen levels are high, the C-terminal adenylyl transferase (AT) inactivates GlnA by covalent transfer of an adenylyl group from ATP to specific tyrosine residue of GlnA, thus reducing its activity. Conversely, when nitrogen levels are low, the N-terminal adenylyl removase (AR) activates GlnA by removing the adenylyl group by phosphorolysis, increasing its activity. The regulatory region of GlnE binds the signal transduction protein PII (GlnB) which indicates the nitrogen status of the cell. This Mannheimia succiniciproducens (strain KCTC 0769BP / MBEL55E) protein is Bifunctional glutamine synthetase adenylyltransferase/adenylyl-removing enzyme.